Here is a 477-residue protein sequence, read N- to C-terminus: Bifunctional protein HldE (477 aa).

The ribokinase stretch occupies residues 1–318 (MQIQLPMFQN…RRAVQQEQGA (318 aa)). 195 to 198 (NLSE) lines the ATP pocket. Residue Asp264 is part of the active site. Residues 344–477 (FTNGCFDIIH…VEKIRKDQVK (134 aa)) form a cytidylyltransferase region.

The protein in the N-terminal section; belongs to the carbohydrate kinase PfkB family. It in the C-terminal section; belongs to the cytidylyltransferase family. As to quaternary structure, homodimer.

The catalysed reaction is D-glycero-beta-D-manno-heptose 7-phosphate + ATP = D-glycero-beta-D-manno-heptose 1,7-bisphosphate + ADP + H(+). The enzyme catalyses D-glycero-beta-D-manno-heptose 1-phosphate + ATP + H(+) = ADP-D-glycero-beta-D-manno-heptose + diphosphate. The protein operates within nucleotide-sugar biosynthesis; ADP-L-glycero-beta-D-manno-heptose biosynthesis; ADP-L-glycero-beta-D-manno-heptose from D-glycero-beta-D-manno-heptose 7-phosphate: step 1/4. It functions in the pathway nucleotide-sugar biosynthesis; ADP-L-glycero-beta-D-manno-heptose biosynthesis; ADP-L-glycero-beta-D-manno-heptose from D-glycero-beta-D-manno-heptose 7-phosphate: step 3/4. Its function is as follows. Catalyzes the phosphorylation of D-glycero-D-manno-heptose 7-phosphate at the C-1 position to selectively form D-glycero-beta-D-manno-heptose-1,7-bisphosphate. Functionally, catalyzes the ADP transfer from ATP to D-glycero-beta-D-manno-heptose 1-phosphate, yielding ADP-D-glycero-beta-D-manno-heptose. This chain is Bifunctional protein HldE, found in Hahella chejuensis (strain KCTC 2396).